The primary structure comprises 1152 residues: Nardilysin (1152 aa).

An N-terminal signal peptide occupies residues 1–20 (MLRKVTVAAVCATRRKLCEA). Disordered stretches follow at residues 81 to 108 (LGAD…KSPS) and 133 to 208 (MEGK…KKTT). Ser-86, Ser-94, and Ser-96 each carry phosphoserine. The span at 141-198 (TDDEEEEEVEEEEEDDDEDSGAEIEDDDEEGFDDEDEFDDEHDDDLDTEDNELEELEE) shows a compositional bias: acidic residues. Position 234 (His-234) interacts with Zn(2+). The Proton acceptor role is filled by Glu-237. 2 residues coordinate Zn(2+): His-238 and Glu-315.

This sequence belongs to the peptidase M16 family. As to quaternary structure, interacts with BACE1 and NRG1. Requires Zn(2+) as cofactor.

It localises to the mitochondrion. The protein resides in the cell projection. Its subcellular location is the dendrite. The catalysed reaction is Hydrolysis of polypeptides, preferably at -Xaa-|-Arg-Lys-, and less commonly at -Arg-|-Arg-Xaa-, in which Xaa is not Arg or Lys.. Cleaves peptide substrates on the N-terminus of arginine residues in dibasic pairs. Is a critical activator of BACE1- and ADAM17-mediated pro-neuregulin ectodomain shedding, involved in the positive regulation of axonal maturation and myelination. Required for proper functioning of 2-oxoglutarate dehydrogenase (OGDH). This Pongo abelii (Sumatran orangutan) protein is Nardilysin.